We begin with the raw amino-acid sequence, 112 residues long: UPF0145 protein RB3016 (112 aa).

This sequence belongs to the UPF0145 family.

This Rhodopirellula baltica (strain DSM 10527 / NCIMB 13988 / SH1) protein is UPF0145 protein RB3016.